Consider the following 561-residue polypeptide: Arginine--tRNA ligase (561 aa).

Positions 128-138 (ANPTGPLHVGH) match the 'HIGH' region motif.

This sequence belongs to the class-I aminoacyl-tRNA synthetase family. Monomer.

The protein localises to the cytoplasm. It catalyses the reaction tRNA(Arg) + L-arginine + ATP = L-arginyl-tRNA(Arg) + AMP + diphosphate. The protein is Arginine--tRNA ligase of Methylibium petroleiphilum (strain ATCC BAA-1232 / LMG 22953 / PM1).